Here is a 159-residue protein sequence, read N- to C-terminus: Glucosamine 6-phosphate N-acetyltransferase (159 aa).

Ser2 carries the post-translational modification N-acetylserine. Residues Thr28, 86 to 89 (KIIH), and 98 to 100 (EDI) contribute to the D-glucosamine 6-phosphate site. In terms of domain architecture, N-acetyltransferase spans 28–159 (TTVGTITPES…NAGVEMQIRK (132 aa)). Acetyl-CoA contacts are provided by residues 100–102 (IAV) and 108–113 (GQGLGK). D-glucosamine 6-phosphate is bound by residues 129–130 (YK) and Asp134. An acetyl-CoA-binding site is contributed by 143–145 (YEK). Arg158 contributes to the D-glucosamine 6-phosphate binding site.

This sequence belongs to the acetyltransferase family. GNA1 subfamily. Homodimer.

It catalyses the reaction D-glucosamine 6-phosphate + acetyl-CoA = N-acetyl-D-glucosamine 6-phosphate + CoA + H(+). Its pathway is nucleotide-sugar biosynthesis; UDP-N-acetyl-alpha-D-glucosamine biosynthesis; N-acetyl-alpha-D-glucosamine 1-phosphate from alpha-D-glucosamine 6-phosphate (route I): step 1/2. The protein is Glucosamine 6-phosphate N-acetyltransferase (GNA1) of Saccharomyces cerevisiae (strain ATCC 204508 / S288c) (Baker's yeast).